Consider the following 359-residue polypeptide: Nicotinate-nucleotide--dimethylbenzimidazole phosphoribosyltransferase (359 aa).

Glu-318 acts as the Proton acceptor in catalysis.

Belongs to the CobT family. Homodimer.

The catalysed reaction is 5,6-dimethylbenzimidazole + nicotinate beta-D-ribonucleotide = alpha-ribazole 5'-phosphate + nicotinate + H(+). The protein operates within nucleoside biosynthesis; alpha-ribazole biosynthesis; alpha-ribazole from 5,6-dimethylbenzimidazole: step 1/2. Functionally, catalyzes the synthesis of alpha-ribazole-5'-phosphate from nicotinate mononucleotide (NAMN) and 5,6-dimethylbenzimidazole (DMB). This chain is Nicotinate-nucleotide--dimethylbenzimidazole phosphoribosyltransferase, found in Escherichia coli O9:H4 (strain HS).